Consider the following 299-residue polypeptide: Recombination-associated protein RdgC (299 aa).

It belongs to the RdgC family.

The protein localises to the cytoplasm. It localises to the nucleoid. In terms of biological role, may be involved in recombination. The sequence is that of Recombination-associated protein RdgC from Bordetella bronchiseptica (strain ATCC BAA-588 / NCTC 13252 / RB50) (Alcaligenes bronchisepticus).